The primary structure comprises 271 residues: Undecaprenyl-diphosphatase 2 (271 aa).

Transmembrane regions (helical) follow at residues 1-21 (MNFF…LFPI), 46-66 (NFLE…IVYF), 88-108 (ALIV…EQTI), 111-131 (AFSD…LLFF), 146-166 (LKGW…IPGF), 190-210 (SMLL…PKLI), 220-240 (LSLI…YILM), and 251-271 (MLPF…SKAI).

It belongs to the UppP family.

It localises to the cell membrane. The catalysed reaction is di-trans,octa-cis-undecaprenyl diphosphate + H2O = di-trans,octa-cis-undecaprenyl phosphate + phosphate + H(+). Its function is as follows. Catalyzes the dephosphorylation of undecaprenyl diphosphate (UPP). Confers resistance to bacitracin. The polypeptide is Undecaprenyl-diphosphatase 2 (Oenococcus oeni (strain ATCC BAA-331 / PSU-1)).